A 374-amino-acid chain; its full sequence is Alcohol dehydrogenase class-3 (374 aa).

Alanine 2 is modified (N-acetylalanine). 7 residues coordinate Zn(2+): cysteine 45, histidine 67, cysteine 97, cysteine 100, cysteine 103, cysteine 111, and cysteine 174. An N6-succinyllysine modification is found at lysine 233. Phosphoserine is present on serine 247. Lysine 315 is modified (N6-succinyllysine). The residue at position 324 (serine 324) is a Phosphoserine.

It belongs to the zinc-containing alcohol dehydrogenase family. Class-III subfamily. In terms of assembly, homodimer. It depends on Zn(2+) as a cofactor.

The protein resides in the cytoplasm. The catalysed reaction is a primary alcohol + NAD(+) = an aldehyde + NADH + H(+). It catalyses the reaction a secondary alcohol + NAD(+) = a ketone + NADH + H(+). The enzyme catalyses S-(hydroxymethyl)glutathione + NADP(+) = S-formylglutathione + NADPH + H(+). It carries out the reaction S-(hydroxymethyl)glutathione + NAD(+) = S-formylglutathione + NADH + H(+). The catalysed reaction is 20-oxo-(5Z,8Z,11Z,14Z)-eicosatetraenoate + NAD(+) + H2O = (5Z,8Z,11Z,14Z)-eicosatetraenedioate + NADH + 2 H(+). It catalyses the reaction 20-hydroxy-(5Z,8Z,11Z,14Z)-eicosatetraenoate + NAD(+) = 20-oxo-(5Z,8Z,11Z,14Z)-eicosatetraenoate + NADH + H(+). The enzyme catalyses S-nitrosoglutathione + NADH + H(+) = S-(hydroxysulfenamide)glutathione + NAD(+). Its function is as follows. Catalyzes the oxidation of long-chain primary alcohols and the oxidation of S-(hydroxymethyl) glutathione. Also oxidizes long chain omega-hydroxy fatty acids, such as 20-HETE, producing both the intermediate aldehyde, 20-oxoarachidonate and the end product, a dicarboxylic acid, (5Z,8Z,11Z,14Z)-eicosatetraenedioate. Class-III ADH is remarkably ineffective in oxidizing ethanol. Required for clearance of cellular formaldehyde, a cytotoxic and carcinogenic metabolite that induces DNA damage. Also acts as a S-nitroso-glutathione reductase by catalyzing the NADH-dependent reduction of S-nitrosoglutathione, thereby regulating protein S-nitrosylation. This chain is Alcohol dehydrogenase class-3, found in Bos taurus (Bovine).